Reading from the N-terminus, the 58-residue chain is Small ribosomal subunit protein bS21 (58 aa).

The span at 32 to 42 shows a compositional bias: basic and acidic residues; sequence ARRREHYEKPS. The segment at 32–58 is disordered; sequence ARRREHYEKPSVRRKKKSEAARKRRWH. Basic residues predominate over residues 43–58; the sequence is VRRKKKSEAARKRRWH.

It belongs to the bacterial ribosomal protein bS21 family.

The polypeptide is Small ribosomal subunit protein bS21 (Moorella thermoacetica (strain ATCC 39073 / JCM 9320)).